A 220-amino-acid polypeptide reads, in one-letter code: Outer membrane protein assembly factor BamD (220 aa).

A signal peptide spans 1 to 22; it reads MRLKHFKTFLFITMAIIVIGTG. A lipid anchor (N-palmitoyl cysteine) is attached at Cys23. Cys23 carries S-diacylglycerol cysteine lipidation.

The protein belongs to the BamD family. As to quaternary structure, part of the Bam complex.

Its subcellular location is the cell outer membrane. In terms of biological role, part of the outer membrane protein assembly complex, which is involved in assembly and insertion of beta-barrel proteins into the outer membrane. This chain is Outer membrane protein assembly factor BamD, found in Helicobacter pylori (strain ATCC 700392 / 26695) (Campylobacter pylori).